A 272-amino-acid polypeptide reads, in one-letter code: Pyrroline-5-carboxylate reductase 3 (272 aa).

This sequence belongs to the pyrroline-5-carboxylate reductase family.

It is found in the cytoplasm. It catalyses the reaction L-proline + NADP(+) = (S)-1-pyrroline-5-carboxylate + NADPH + 2 H(+). The enzyme catalyses L-proline + NAD(+) = (S)-1-pyrroline-5-carboxylate + NADH + 2 H(+). The protein operates within amino-acid biosynthesis; L-proline biosynthesis; L-proline from L-glutamate 5-semialdehyde: step 1/1. In terms of biological role, catalyzes the reduction of 1-pyrroline-5-carboxylate (PCA) to L-proline. The sequence is that of Pyrroline-5-carboxylate reductase 3 (proG) from Bacillus subtilis (strain 168).